The primary structure comprises 533 residues: uncharacterized protein (533 aa).

The first 21 residues, 1 to 21 (MVKVWKIGFGVFLPTALLFSA), serve as a signal peptide directing secretion. A lipid anchor (N-palmitoyl cysteine) is attached at C22. The S-diacylglycerol cysteine moiety is linked to residue C22. Positions 91–111 (LSKNKEGQTASQTRSSSEQTT) are disordered. Residues 97-111 (GQTASQTRSSSEQTT) are compositionally biased toward polar residues.

It belongs to the MG067/MG068/MG395 family.

The protein resides in the cell membrane. This is an uncharacterized protein from Mycoplasma pneumoniae (strain ATCC 29342 / M129 / Subtype 1) (Mycoplasmoides pneumoniae).